A 399-amino-acid polypeptide reads, in one-letter code: Elongation factor Tu (399 aa).

Residues 10–209 form the tr-type G domain; the sequence is KPHVNIGTIG…AVDEYIPEPT (200 aa). The tract at residues 19 to 26 is G1; it reads GHVDHGKT. Residue 19-26 participates in GTP binding; sequence GHVDHGKT. A Mg(2+)-binding site is contributed by Thr-26. The G2 stretch occupies residues 60–64; that stretch reads GITIA. A G3 region spans residues 81-84; sequence DCPG. GTP is bound by residues 81–85 and 136–139; these read DCPGH and NKED. Positions 136–139 are G4; that stretch reads NKED. The segment at 174 to 176 is G5; sequence SAK.

It belongs to the TRAFAC class translation factor GTPase superfamily. Classic translation factor GTPase family. EF-Tu/EF-1A subfamily. Monomer.

The protein resides in the cytoplasm. It catalyses the reaction GTP + H2O = GDP + phosphate + H(+). Its function is as follows. GTP hydrolase that promotes the GTP-dependent binding of aminoacyl-tRNA to the A-site of ribosomes during protein biosynthesis. In Sulfurimonas denitrificans (strain ATCC 33889 / DSM 1251) (Thiomicrospira denitrificans (strain ATCC 33889 / DSM 1251)), this protein is Elongation factor Tu.